Reading from the N-terminus, the 131-residue chain is C-C motif chemokine 21 (131 aa).

The N-terminal stretch at 1–23 (MAQSLALSLLILVLAFGIPGTQG) is a signal peptide. 3 disulfides stabilise this stretch: Cys-31-Cys-57, Cys-32-Cys-75, and Cys-103-Cys-119. Positions 89–131 (HLDKTPTPRKPVQGCRKDRGVPKNGKKGKGCKRTEQSQTPKGP) are disordered.

It belongs to the intercrine beta (chemokine CC) family. As to quaternary structure, monomer. Binds to CCR7. Interacts with PDPN; relocalizes PDPN to the basolateral membrane. Interacts with TNFAIP6 (via Link domain). Interacts with GPR174.

It localises to the secreted. Inhibits hemopoiesis and stimulates chemotaxis. Chemotactic in vitro for thymocytes and activated T-cells, but not for B-cells, macrophages, or neutrophils. Shows preferential activity towards naive T-cells. May play a role in mediating homing of lymphocytes to secondary lymphoid organs. Binds to atypical chemokine receptor ACKR4 and mediates the recruitment of beta-arrestin (ARRB1/2) to ACKR4. In Macaca mulatta (Rhesus macaque), this protein is C-C motif chemokine 21 (CCL21).